Consider the following 157-residue polypeptide: Ribosome-binding factor A (157 aa).

Residues 127-157 (QQQFGSEDASVEDEVLGDDVADDADETEGKD) form a disordered region. Residues 135 to 157 (ASVEDEVLGDDVADDADETEGKD) are compositionally biased toward acidic residues.

Belongs to the RbfA family. Monomer. Binds 30S ribosomal subunits, but not 50S ribosomal subunits or 70S ribosomes.

The protein resides in the cytoplasm. One of several proteins that assist in the late maturation steps of the functional core of the 30S ribosomal subunit. Associates with free 30S ribosomal subunits (but not with 30S subunits that are part of 70S ribosomes or polysomes). Required for efficient processing of 16S rRNA. May interact with the 5'-terminal helix region of 16S rRNA. The sequence is that of Ribosome-binding factor A from Shewanella baltica (strain OS155 / ATCC BAA-1091).